The chain runs to 94 residues: Putative regulatory protein Sfum_3631 (94 aa).

This sequence belongs to the RemA family.

The sequence is that of Putative regulatory protein Sfum_3631 from Syntrophobacter fumaroxidans (strain DSM 10017 / MPOB).